The chain runs to 360 residues: Glutamate 5-kinase (360 aa).

Lys-7 provides a ligand contact to ATP. Residues Ser-47, Asp-134, and Asn-146 each coordinate substrate. ATP contacts are provided by residues 166–167 (TD) and 210–216 (TGGISTK). In terms of domain architecture, PUA spans 275–356 (VGKITLDDGA…SSIIVVHRDV (82 aa)).

This sequence belongs to the glutamate 5-kinase family.

The protein localises to the cytoplasm. The catalysed reaction is L-glutamate + ATP = L-glutamyl 5-phosphate + ADP. It functions in the pathway amino-acid biosynthesis; L-proline biosynthesis; L-glutamate 5-semialdehyde from L-glutamate: step 1/2. Catalyzes the transfer of a phosphate group to glutamate to form L-glutamate 5-phosphate. The chain is Glutamate 5-kinase from Prochlorococcus marinus (strain MIT 9312).